Consider the following 585-residue polypeptide: Arginine--tRNA ligase (585 aa).

The short motif at 130–140 (ANPTGPMHVGH) is the 'HIGH' region element.

This sequence belongs to the class-I aminoacyl-tRNA synthetase family. Monomer.

Its subcellular location is the cytoplasm. It catalyses the reaction tRNA(Arg) + L-arginine + ATP = L-arginyl-tRNA(Arg) + AMP + diphosphate. The protein is Arginine--tRNA ligase of Methylorubrum extorquens (strain CM4 / NCIMB 13688) (Methylobacterium extorquens).